The chain runs to 148 residues: Major microfilarial sheath protein (148 aa).

The N-terminal stretch at 1–18 is a signal peptide; it reads MCCKAILSFCILSSLGNA. The propeptide at 19–43 is removed in mature form; sequence LYFGSHRPQYLREVGQRQYPFEPQA. 5 consecutive repeats follow at residues 46–50, 54–58, 59–63, 64–68, and 71–75; these read MLPVP, MGPQP, MEPQP, and MGPQS. Positions 46-75 are repeat-rich region; it reads MLPVPQQPMGPQPMGPQPMEPQPLPMGPQS. Positions 52–73 are enriched in pro residues; it reads QPMGPQPMGPQPMEPQPLPMGP. The interval 52–80 is disordered; sequence QPMGPQPMGPQPMEPQPLPMGPQSPQMQV.

This sequence to B.pahangi filarial sheath protein. O-glycosylated.

This Litomosoides carinii protein is Major microfilarial sheath protein (GP22).